A 405-amino-acid polypeptide reads, in one-letter code: NAC transcription factor NAM-A1 (405 aa).

Residues 1-10 (MGSSDSSSGS) are compositionally biased toward low complexity. The interval 1 to 38 (MGSSDSSSGSAQKAARHQHEPPPPRQRGSAPELPPGFR) is disordered. The 172-residue stretch at 33-204 (LPPGFRFHPT…DWVLCRIYKK (172 aa)) folds into the NAC domain. A DNA-binding region spans residues 137–210 (LGVKKALVFY…IYKKINKAAA (74 aa)).

Expressed in flag leaves, green spikes and peduncles.

The protein resides in the nucleus. Transcription factor of the NAC family associated with the grain protein content (GPC). Accelerates senescence and increases nutrient remobilization from leaves to developing grains. The tetraploid cultivated wheat (T.durum) contains one additional gene coding for a functional protein (NAM-B2) and one extra pseudogene (NAM-B1). The protein is NAC transcription factor NAM-A1 (NAM-A1) of Triticum turgidum subsp. durum (Durum wheat).